A 61-amino-acid polypeptide reads, in one-letter code: Large ribosomal subunit protein uL30 (61 aa).

This sequence belongs to the universal ribosomal protein uL30 family. Part of the 50S ribosomal subunit.

The protein is Large ribosomal subunit protein uL30 of Laribacter hongkongensis (strain HLHK9).